Reading from the N-terminus, the 272-residue chain is Undecaprenyl-diphosphatase (272 aa).

Helical transmembrane passes span 6–26 (SLLV…LPVS), 45–65 (AKTF…VMFW), 89–109 (LSLI…LVFH), 115–135 (LFNP…LIIA), 156–176 (AFFI…RSGA), 189–209 (YAAS…ATAL), 221–241 (ADLP…LVAI), and 251–271 (ISFI…FAVF).

Belongs to the UppP family.

It is found in the cell inner membrane. It catalyses the reaction di-trans,octa-cis-undecaprenyl diphosphate + H2O = di-trans,octa-cis-undecaprenyl phosphate + phosphate + H(+). Its function is as follows. Catalyzes the dephosphorylation of undecaprenyl diphosphate (UPP). Confers resistance to bacitracin. This is Undecaprenyl-diphosphatase from Cronobacter sakazakii (strain ATCC BAA-894) (Enterobacter sakazakii).